Here is a 123-residue protein sequence, read N- to C-terminus: Large ribosomal subunit protein uL14 (123 aa).

It belongs to the universal ribosomal protein uL14 family. Part of the 50S ribosomal subunit. Forms a cluster with proteins L3 and L19. In the 70S ribosome, L14 and L19 interact and together make contacts with the 16S rRNA in bridges B5 and B8.

Binds to 23S rRNA. Forms part of two intersubunit bridges in the 70S ribosome. This is Large ribosomal subunit protein uL14 from Photorhabdus laumondii subsp. laumondii (strain DSM 15139 / CIP 105565 / TT01) (Photorhabdus luminescens subsp. laumondii).